The primary structure comprises 799 residues: Protein translocase subunit SecA (799 aa).

ATP-binding positions include Gln-85, 103–107 (GEGKT), and Asp-504.

Belongs to the SecA family. Monomer and homodimer. Part of the essential Sec protein translocation apparatus which comprises SecA, SecYEG and auxiliary proteins SecDF. Other proteins may also be involved.

Its subcellular location is the cell membrane. It localises to the cytoplasm. The catalysed reaction is ATP + H2O + cellular proteinSide 1 = ADP + phosphate + cellular proteinSide 2.. In terms of biological role, part of the Sec protein translocase complex. Interacts with the SecYEG preprotein conducting channel. Has a central role in coupling the hydrolysis of ATP to the transfer of proteins into and across the cell membrane, serving as an ATP-driven molecular motor driving the stepwise translocation of polypeptide chains across the membrane. This is Protein translocase subunit SecA from Lactobacillus gasseri (strain ATCC 33323 / DSM 20243 / BCRC 14619 / CIP 102991 / JCM 1131 / KCTC 3163 / NCIMB 11718 / NCTC 13722 / AM63).